The sequence spans 792 residues: Phenylalanine--tRNA ligase beta subunit (792 aa).

The region spanning G39–A147 is the tRNA-binding domain. Residues P400 to T475 form the B5 domain. Mg(2+) is bound by residues D453, D459, E462, and E463. Residues S698–R791 form the FDX-ACB domain.

Belongs to the phenylalanyl-tRNA synthetase beta subunit family. Type 1 subfamily. Tetramer of two alpha and two beta subunits. Mg(2+) serves as cofactor.

Its subcellular location is the cytoplasm. It catalyses the reaction tRNA(Phe) + L-phenylalanine + ATP = L-phenylalanyl-tRNA(Phe) + AMP + diphosphate + H(+). The chain is Phenylalanine--tRNA ligase beta subunit (pheT) from Xylella fastidiosa (strain 9a5c).